An 881-amino-acid polypeptide reads, in one-letter code: Probable alpha/beta-glucosidase agdC (881 aa).

An N-terminal signal peptide occupies residues 1 to 14 (MLRSLLLLAPLVGA). N-linked (GlcNAc...) asparagine glycosylation is found at asparagine 171, asparagine 293, and asparagine 373. The Nucleophile role is filled by aspartate 422. The active site involves glutamate 425. The interval 440–485 (YARDNDLPPAAPPVRPSNPRPLPGFPGDFQPSSSSKRSTKGSKVGL) is disordered. Positions 448 to 463 (PAAPPVRPSNPRPLPG) are enriched in pro residues. Residue asparagine 506 is glycosylated (N-linked (GlcNAc...) asparagine). The Proton donor role is filled by aspartate 571. N-linked (GlcNAc...) asparagine glycosylation is found at asparagine 572, asparagine 608, and asparagine 742.

This sequence belongs to the glycosyl hydrolase 31 family.

It is found in the secreted. The catalysed reaction is Hydrolysis of terminal, non-reducing (1-&gt;4)-linked alpha-D-glucose residues with release of alpha-D-glucose.. It catalyses the reaction Hydrolysis of terminal, non-reducing beta-D-glucosyl residues with release of beta-D-glucose.. Functionally, glucosidase involved in the degradation of cellulosic biomass. Has both alpha- and beta-glucosidase activity. In Aspergillus fumigatus (strain CBS 144.89 / FGSC A1163 / CEA10) (Neosartorya fumigata), this protein is Probable alpha/beta-glucosidase agdC (agdC).